The chain runs to 1538 residues: Lhr helicase/uracil glycosylase (1538 aa).

The interval methionine 1–aspartate 897 is lhr-Core. 8 residues coordinate ATP: glutamine 34, lysine 57, threonine 58, aspartate 179, glutamate 180, isoleucine 398, arginine 415, and histidine 418. Residues tryptophan 38–valine 235 form the Helicase ATP-binding domain. The DEVH box motif lies at aspartate 179 to histidine 182. Residues glycine 284–aspartate 462 enclose the Helicase C-terminal domain. The interval valine 463 to arginine 552 is beta-sheet bundle. The WH domain stretch occupies residues glycine 553 to glutamate 623. The interval glycine 624 to aspartate 897 is domain 4. The lhr-CTD stretch occupies residues serine 898–glycine 1538. A disordered region spans residues serine 1287–proline 1312. Positions serine 1292–arginine 1303 are enriched in basic residues.

This sequence belongs to the Lhr helicase family. In terms of assembly, homooligomerizes, probably a homotetramer. The cofactor is Ca(2+). It depends on Uracil deglycosylase activity does not require a cofactor. as a cofactor.

The catalysed reaction is Couples ATP hydrolysis with the unwinding of duplex DNA by translocating in the 3'-5' direction.. It catalyses the reaction ATP + H2O = ADP + phosphate + H(+). It carries out the reaction Hydrolyzes single-stranded DNA or mismatched double-stranded DNA and polynucleotides, releasing free uracil.. Its function is as follows. A 3'-5' helicase probably involved in DNA repair. Translocates in an ATP-dependent manner 3'-to-5' on single-stranded (ss)DNA, unwinding any encountered duplex nucleic acid. An RNA:DNA hybrid with a 3'-ssDNA loading strand is a 4.5-fold better helicase substrate than 3'-tailed double-stranded (ds)DNA; substrates where the helicase loads on a 3'-ssRNA tail (DNA:RNA and RNA:RNA) are not unwound. Unlike its M.smegmatis counterpart, the ATPase is not ssDNA-dependent. Forms a clamp around the ssDNA loading strand. Excises uracil residues from DNA; forked DNA with a dU residue is the best substrate followed by ssDNA. Inactive on dsDNA with a dU residue or DNA with an 8-oxoguanine residue. Uracil residues in DNA can arise as a result of misincorporation of dUMP residues by DNA polymerase or due to deamination of cytosine. The polypeptide is Lhr helicase/uracil glycosylase (Escherichia coli (strain K12)).